Consider the following 307-residue polypeptide: Ribonuclease Z (307 aa).

Residues H64, H66, D68, H69, H141, D209, and H267 each coordinate Zn(2+). The active-site Proton acceptor is the D68.

The protein belongs to the RNase Z family. In terms of assembly, homodimer. Requires Zn(2+) as cofactor.

The enzyme catalyses Endonucleolytic cleavage of RNA, removing extra 3' nucleotides from tRNA precursor, generating 3' termini of tRNAs. A 3'-hydroxy group is left at the tRNA terminus and a 5'-phosphoryl group is left at the trailer molecule.. Zinc phosphodiesterase, which displays some tRNA 3'-processing endonuclease activity. Probably involved in tRNA maturation, by removing a 3'-trailer from precursor tRNA. The sequence is that of Ribonuclease Z from Thermoplasma acidophilum (strain ATCC 25905 / DSM 1728 / JCM 9062 / NBRC 15155 / AMRC-C165).